The primary structure comprises 323 residues: Sphingolipid delta(4)-desaturase DES1 (323 aa).

2 consecutive transmembrane segments (helical) span residues 41–61 and 68–88; these read HNLI…FYLV and WLLF…TLAI. The Histidine box-1 motif lies at 89–93; that stretch reads HEISH. The chain crosses the membrane as a helical span at residues 104–124; it reads WNRCFGMFANLPLGLPYSVSF. The Histidine box-2 motif lies at 128-132; sequence HMDHH. The next 3 membrane-spanning stretches (helical) occupy residues 152–172, 185–205, and 210–230; these read FFCT…FYTI, LEII…YTLG, and FYML…GHFI. Residues 259–263 carry the Histidine box-3 motif; the sequence is HNEHH.

Belongs to the fatty acid desaturase type 1 family. DEGS subfamily. As to quaternary structure, interacts with RLBP1; the interaction increases synthesis of chromophore-precursors by DEGS1.

It localises to the endoplasmic reticulum membrane. The catalysed reaction is an N-acylsphinganine + 2 Fe(II)-[cytochrome b5] + O2 + 2 H(+) = an N-acylsphing-4-enine + 2 Fe(III)-[cytochrome b5] + 2 H2O. It carries out the reaction all-trans-retinol = 11-cis-retinol. It catalyses the reaction all-trans-retinol = 9-cis-retinol. The enzyme catalyses all-trans-retinol = 13-cis-retinol. The catalysed reaction is 11-cis-retinol = 13-cis-retinol. It carries out the reaction 11-cis-retinol = 9-cis-retinol. In terms of biological role, has sphingolipid-delta-4-desaturase activity. Converts D-erythro-sphinganine to D-erythro-sphingosine (E-sphing-4-enine). Catalyzes the equilibrium isomerization of retinols. This Xenopus tropicalis (Western clawed frog) protein is Sphingolipid delta(4)-desaturase DES1 (degs1).